The following is a 400-amino-acid chain: Large envelope protein (400 aa).

At Met1 the chain carries N-acetylmethionine. Gly2 carries the N-myristoyl glycine; by host lipid modification. The pre-S1 stretch occupies residues 2–119 (GAPLSTARRG…PPLRDTHPQA (118 aa)). Residues 2–174 (GAPLSTARRG…FSKTGDPAMN (173 aa)) form a pre-S region. The Virion surface; in external conformation segment spans residues 2-181 (GAPLSTARRG…AMNMENITSG (180 aa)). Residues 2-253 (GAPLSTARRG…PGYRWMCLRR (252 aa)) are Intravirion; in internal conformation-facing. Pro4 is a glycosylation site (N-linked (GlcNAc...) asparagine). The tract at residues 70–115 (PHGGLLGWSPQAQGILTTSPPDPPPASTNRRSGRKPTPVSPPLRDT) is disordered. Residues 79-88 (PQAQGILTTS) are compositionally biased toward polar residues. The tract at residues 120–174 (MQWNSTQFHQALLDPRVRGLYFPAGGSSSETQNPAPTIASLTSSIFSKTGDPAMN) is pre-S2. Residues 182–202 (LLRPLLVLQAVCFLLTKILTI) form a helical membrane-spanning segment. Residues 203 to 253 (PQSLDSWWTSLNFLGVPPGCPGQNSQSPISNHLPTSCPPTCPGYRWMCLRR) are Intravirion; in external conformation-facing. A helical transmembrane segment spans residues 254 to 274 (FIIFLFILLLCLIFLLVLLDY). Over 275–348 (QGMLPVCPLL…WASARFSWLS (74 aa)) the chain is Virion surface. A glycan (N-linked (GlcNAc...) asparagine; by host) is linked at Asn320. Residues 349-369 (LLVQFVQWCVGLSPTVWLLVI) traverse the membrane as a helical segment. At 370–375 (WMIWYW) the chain is on the intravirion side. The chain crosses the membrane as a helical span at residues 376–398 (GPNLCSILSPFIPLLPIFCYLWA). Topologically, residues 399-400 (SI) are virion surface.

Belongs to the orthohepadnavirus major surface antigen family. In terms of assembly, in its internal form (Li-HBsAg), interacts with the capsid protein and with the isoform S. Interacts with host chaperone CANX. Associates with host chaperone CANX through its pre-S2 N glycan; this association may be essential for isoform M proper secretion. As to quaternary structure, interacts with isoform L. Interacts with the antigens of satellite virus HDV (HDVAgs); this interaction is required for encapsidation of HDV genomic RNA. Post-translationally, isoform M is N-terminally acetylated by host at a ratio of 90%, and N-glycosylated by host at the pre-S2 region. Myristoylated.

It is found in the virion membrane. Its function is as follows. The large envelope protein exists in two topological conformations, one which is termed 'external' or Le-HBsAg and the other 'internal' or Li-HBsAg. In its external conformation the protein attaches the virus to cell receptors and thereby initiating infection. This interaction determines the species specificity and liver tropism. This attachment induces virion internalization predominantly through caveolin-mediated endocytosis. The large envelope protein also assures fusion between virion membrane and endosomal membrane. In its internal conformation the protein plays a role in virion morphogenesis and mediates the contact with the nucleocapsid like a matrix protein. In terms of biological role, the middle envelope protein plays an important role in the budding of the virion. It is involved in the induction of budding in a nucleocapsid independent way. In this process the majority of envelope proteins bud to form subviral lipoprotein particles of 22 nm of diameter that do not contain a nucleocapsid. The protein is Large envelope protein of Hepatitis B virus genotype H (isolate United States/LAS2523/2002) (HBV-H).